A 188-amino-acid chain; its full sequence is dCTP deaminase (188 aa).

Residues 111–116 (KSTYAR), 135–137 (TLE), Q156, Y170, and Q180 contribute to the dCTP site. The active-site Proton donor/acceptor is the E137.

It belongs to the dCTP deaminase family. As to quaternary structure, homotrimer.

The enzyme catalyses dCTP + H2O + H(+) = dUTP + NH4(+). Its pathway is pyrimidine metabolism; dUMP biosynthesis; dUMP from dCTP (dUTP route): step 1/2. Catalyzes the deamination of dCTP to dUTP. The protein is dCTP deaminase of Cupriavidus necator (strain ATCC 17699 / DSM 428 / KCTC 22496 / NCIMB 10442 / H16 / Stanier 337) (Ralstonia eutropha).